A 367-amino-acid polypeptide reads, in one-letter code: Phospho-N-acetylmuramoyl-pentapeptide-transferase (367 aa).

A run of 10 helical transmembrane segments spans residues 16 to 36, 62 to 82, 87 to 107, 125 to 145, 158 to 178, 190 to 210, 214 to 234, 240 to 260, 264 to 284, and 326 to 346; these read LLLAAAAFILTLIVGGWWVHF, TMGGVMIVSTVVVLTVLFNLV, MLLPLGVMISFAVLGAIDDWL, FWIMTAVAFVASLALYLPQPY, VGEVNIGLWFIPIAVLIIVFI, SLAGWNLTLSFGAYGVITFLA, LTNLMAFCFTVVGACAAFLWY, QVFMGDLGALSLGATLAVVAL, QWILLPVIGIVFVVEALSTLI, and FVLIGTVAAMVGISLALIFGS.

The protein belongs to the glycosyltransferase 4 family. MraY subfamily. The cofactor is Mg(2+).

The protein localises to the cell membrane. It catalyses the reaction UDP-N-acetyl-alpha-D-muramoyl-L-alanyl-gamma-D-glutamyl-meso-2,6-diaminopimeloyl-D-alanyl-D-alanine + di-trans,octa-cis-undecaprenyl phosphate = di-trans,octa-cis-undecaprenyl diphospho-N-acetyl-alpha-D-muramoyl-L-alanyl-D-glutamyl-meso-2,6-diaminopimeloyl-D-alanyl-D-alanine + UMP. The protein operates within cell wall biogenesis; peptidoglycan biosynthesis. In terms of biological role, catalyzes the initial step of the lipid cycle reactions in the biosynthesis of the cell wall peptidoglycan: transfers peptidoglycan precursor phospho-MurNAc-pentapeptide from UDP-MurNAc-pentapeptide onto the lipid carrier undecaprenyl phosphate, yielding undecaprenyl-pyrophosphoryl-MurNAc-pentapeptide, known as lipid I. This chain is Phospho-N-acetylmuramoyl-pentapeptide-transferase, found in Chloroflexus aggregans (strain MD-66 / DSM 9485).